Consider the following 37-residue polypeptide: ATP synthase subunit O, mitochondrial (37 aa).

The protein belongs to the ATPase delta chain family. As to quaternary structure, F-type ATPases have 2 components, CF(1) - the catalytic core - and CF(0) - the membrane proton channel. CF(1) has five subunits: alpha(3), beta(3), gamma(1), delta(1), epsilon(1). CF(0) has three main subunits: a, b and c.

The protein resides in the mitochondrion. It is found in the mitochondrion inner membrane. Mitochondrial membrane ATP synthase (F(1)F(0) ATP synthase or Complex V) produces ATP from ADP in the presence of a proton gradient across the membrane which is generated by electron transport complexes of the respiratory chain. F-type ATPases consist of two structural domains, F(1) - containing the extramembraneous catalytic core and F(0) - containing the membrane proton channel, linked together by a central stalk and a peripheral stalk. During catalysis, ATP synthesis in the catalytic domain of F(1) is coupled via a rotary mechanism of the central stalk subunits to proton translocation. Part of the complex F(0) domain and the peripheric stalk, which acts as a stator to hold the catalytic alpha(3)beta(3) subcomplex and subunit a/ATP6 static relative to the rotary elements. The chain is ATP synthase subunit O, mitochondrial from Solanum tuberosum (Potato).